We begin with the raw amino-acid sequence, 87 residues long: Putative regulatory protein syc0519_c (87 aa).

Belongs to the RemA family.

The protein is Putative regulatory protein syc0519_c of Synechococcus sp. (strain ATCC 27144 / PCC 6301 / SAUG 1402/1) (Anacystis nidulans).